An 881-amino-acid chain; its full sequence is Mechanosensitive ion channel protein 4 (881 aa).

A disordered region spans residues 35-245 (FWHNDKSSKP…EEEDPFSEED (211 aa)). A compositionally biased stretch (basic and acidic residues) spans 56–66 (FMRRSSEKSEE). Composition is skewed to polar residues over residues 73–82 (LINQFLNKQK), 100–118 (QKNT…SASP), and 206–230 (TPRS…NQGG). Residues 234 to 245 (LEEEEDPFSEED) are compositionally biased toward acidic residues. 4 helical membrane-spanning segments follow: residues 255–275 (ICVW…SLIC), 297–317 (VMVL…KLFV), 339–359 (KPVQ…FLFD), and 377–397 (VLIC…LVKV). The segment at 457-501 (GPKAVSSPPQVTVGSGRLQKSPSRVGKSPVLSRSGSKKEGGEEGI) is disordered. The span at 463–478 (SPPQVTVGSGRLQKSP) shows a compositional bias: polar residues. Positions 492 to 501 (SKKEGGEEGI) are enriched in basic and acidic residues. 2 helical membrane-spanning segments follow: residues 643-663 (IVDV…LGIA) and 678-698 (VVFV…FVFV).

Belongs to the MscS (TC 1.A.23) family.

It is found in the membrane. Its function is as follows. Mechanosensitive channel that opens in response to stretch forces in the membrane lipid bilayer. This Arabidopsis thaliana (Mouse-ear cress) protein is Mechanosensitive ion channel protein 4 (MSL4).